Here is a 299-residue protein sequence, read N- to C-terminus: MDLFPPKFSKVLVTPDPQYIPGYAGYCPQLKYHVGQTYGQLTAKLLTSPEVSHSQRLVLQTSPLSSTEKETASRSQIWWSRHGASRNLETMIPGYTGFVPLRQNYICKTYAETCRDALSEFNQGQAKRLHNASADLSFPVINSVPDFRPRRSNSPLIALSKDPAPYKAPDPWKPPGSPYFMEDSSPHKYFISGFTGYVPKARFLFGTGYPTITNKALIQFSKEMKAGPASLQKYSLQEEDSSNLPLIPTIYPSKTGLLPSYTGHIPGYRFQYGHTFGKLTHNALGHTASQKNAGAIRLS.

It belongs to the CIMIP2 family. In terms of tissue distribution, expressed in airway epithelial cells.

It localises to the cytoplasm. The protein resides in the cytoskeleton. It is found in the cilium axoneme. Its function is as follows. Microtubule inner protein (MIP) part of the dynein-decorated doublet microtubules (DMTs) in cilia axoneme, which is required for motile cilia beating. In Danio rerio (Zebrafish), this protein is Ciliary microtubule inner protein 2B (cimip2b).